We begin with the raw amino-acid sequence, 619 residues long: TOX high mobility group box family member 4 (619 aa).

Disordered regions lie at residues 153–227 (LGLS…QKPV) and 304–337 (DMDP…PPAL). Thr-176 bears the Phosphothreonine mark. Ser-178, Ser-181, and Ser-182 each carry phosphoserine. Residues 183 to 193 (LHEDGVEEFRR) show a composition bias toward basic and acidic residues. Residues 208–218 (KQKAPKKRKKK) are compositionally biased toward basic residues. The Nuclear localization signal signature appears at 213 to 218 (KKRKKK). Residues 223–291 (PQKPVSAYAL…EYLKALAAYK (69 aa)) constitute a DNA-binding region (HMG box). Positions 307 to 319 (PAPPSQTPSPPPV) are enriched in pro residues. Residue Thr-313 is modified to Phosphothreonine. A Phosphoserine modification is found at Ser-315. Over residues 320–337 (AAADPASPAPASTEPPAL) the composition is skewed to low complexity. Asymmetric dimethylarginine is present on Arg-479. Residues 507-529 (PPPVESSPEQPVNNSPETHTVEE) are disordered. Positions 512–524 (SSPEQPVNNSPET) are enriched in low complexity. 5 positions are modified to phosphoserine: Ser-548, Ser-550, Ser-558, Ser-560, and Ser-565.

As to quaternary structure, component of the PNUTS-PP1 phosphatase complex, composed of PPP1R10/PNUTS, TOX4, WDR82 and PPP1CA or PPP1CB or PPP1CC. Interacts with PPP1R10/PNUTS. Interacts with FOXO1 and CREB1 (increased by cAMP); FOXO1 and CREB1 are required for full induction of TOX4-dependent activity and the interactions are inhibited by insulin.

It is found in the nucleus. The protein resides in the chromosome. In liver, recruited to target gene promoters following treatment with dexamethasone and cAMP. Binding is decreased in presence of insulin. In terms of biological role, transcription factor that modulates cell fate reprogramming from the somatic state to the pluripotent and neuronal fate. In liver, controls the expression of hormone-regulated gluconeogenic genes such as G6PC1 and PCK1. This regulation is independent of the insulin receptor activation. Also acts as a regulatory component of protein phosphatase 1 (PP1) complexes. Component of the PNUTS-PP1 protein phosphatase complex, a PP1 complex that regulates RNA polymerase II transcription pause-release. PNUTS-PP1 also plays a role in the control of chromatin structure and cell cycle progression during the transition from mitosis into interphase. This Bos taurus (Bovine) protein is TOX high mobility group box family member 4 (TOX4).